The following is a 148-amino-acid chain: Ribonuclease pancreatic (148 aa).

An N-terminal signal peptide occupies residues 1-25; sequence MGLEKSLILLPLLVLVFGWVQPSLG. 2 residues coordinate substrate: Lys32 and Arg35. His37 functions as the Proton acceptor in the catalytic mechanism. 4 disulfides stabilise this stretch: Cys50/Cys108, Cys64/Cys119, Cys82/Cys134, and Cys89/Cys96. A glycan (N-linked (GlcNAc...) asparagine) is linked at Asn58. 65–69 provides a ligand contact to substrate; that stretch reads KPVNT. An N-linked (GlcNAc...) asparagine glycan is attached at Asn86. Positions 90 and 109 each coordinate substrate. His143 (proton donor) is an active-site residue.

Belongs to the pancreatic ribonuclease family. As to quaternary structure, monomer. Interacts with and forms tight 1:1 complexes with RNH1. Dimerization of two such complexes may occur. Interaction with RNH1 inhibits this protein. As to expression, pancreas.

The protein resides in the secreted. The enzyme catalyses an [RNA] containing cytidine + H2O = an [RNA]-3'-cytidine-3'-phosphate + a 5'-hydroxy-ribonucleotide-3'-[RNA].. It catalyses the reaction an [RNA] containing uridine + H2O = an [RNA]-3'-uridine-3'-phosphate + a 5'-hydroxy-ribonucleotide-3'-[RNA].. Functionally, endonuclease that catalyzes the cleavage of RNA on the 3' side of pyrimidine nucleotides. Acts on single-stranded and double-stranded RNA. The polypeptide is Ribonuclease pancreatic (RNASE1) (Myodes glareolus (Bank vole)).